The chain runs to 648 residues: ATPase family AAA domain-containing protein 3B (648 aa).

Disordered regions lie at residues 1-54 (MSWL…DPTG) and 111-134 (QAEERRKTLSEETRQHQARAQYQD). Position 2 is an N-acetylserine (Ser-2). Topologically, residues 2–246 (SWLFGVNKGP…FRAFVTDRDK (245 aa)) are mitochondrial intermembrane. Over residues 17 to 26 (GPPPPLPPAQ) the composition is skewed to pro residues. Basic and acidic residues-rich tracts occupy residues 32–48 (GGDRGLGDRPAPKDKWS) and 111–125 (QAEERRKTLSEETRQ). The stretch at 69 to 214 (RYAKEALNLA…DIIREQIRLK (146 aa)) forms a coiled coil. The helical intramembrane region spans 247-264 (VTATVAGLTLLAVGVYSA). Over 265-648 (KNATAVTGRF…PFCPPGHPLL (384 aa)) the chain is Mitochondrial intermembrane. 352–359 (GPPGTGKT) is a binding site for ATP. Lys-427 and Lys-495 each carry N6-acetyllysine.

It belongs to the AAA ATPase family. Forms heterooligomers with ATAD3A. Interacts with components of the mitochondrial ribosome, including MRPL11 and MRPS18B, and with other proteins involved in mitochondrial RNA metabolism, possibly via interaction with ATAD3A. Interacts with GADD45GIP1. Tends to be down-regulated in differentiated cells and re-expressed in pluripotent stem cells or cancer cells (at protein level).

It localises to the mitochondrion inner membrane. May play a role in a mitochondrial network organization typical for stem cells, characterized by reduced mitochondrial metabolism, low mtDNA copies and fragmentated mitochondrial network. May act by suppressing ATAD3A function, interfering with ATAD3A interaction with matrix nucleoid complexes. The protein is ATPase family AAA domain-containing protein 3B (ATAD3B) of Homo sapiens (Human).